We begin with the raw amino-acid sequence, 291 residues long: Gamma-sarcoglycan (291 aa).

A helical; Signal-anchor for type II membrane protein membrane pass occupies residues 38 to 58; the sequence is LFVLLLLIILLVNFALTIWIL. At 59–291 the chain is on the extracellular side; it reads KVMWFSPTGM…TCHEHSHICL (233 aa). A glycan (N-linked (GlcNAc...) asparagine) is linked at asparagine 110. Cystine bridges form between cysteine 265-cysteine 290 and cysteine 267-cysteine 283.

The protein belongs to the sarcoglycan beta/delta/gamma/zeta family. Interacts with the syntrophin SNTA1. Cross-link to form 2 major subcomplexes: one consisting of SGCB, SGCD and SGCG and the other consisting of SGCB and SGCD. The association between SGCB and SGCG is particularly strong while SGCA is loosely associated with the other sarcoglycans. Interacts with FLNC. Post-translationally, disulfide bonds are present.

It is found in the cell membrane. The protein resides in the sarcolemma. The protein localises to the cytoplasm. It localises to the cytoskeleton. Functionally, component of the sarcoglycan complex, a subcomplex of the dystrophin-glycoprotein complex which forms a link between the F-actin cytoskeleton and the extracellular matrix. This chain is Gamma-sarcoglycan (SGCG), found in Canis lupus familiaris (Dog).